Here is a 458-residue protein sequence, read N- to C-terminus: Vacuolar basic amino acid transporter 3 (458 aa).

At 1-9 (MNMLIVGRV) the chain is on the cytoplasmic side. Residues 10–30 (VASVGGSGLQTLCFVIGCTMV) form a helical membrane-spanning segment. Residues 31 to 36 (GERSRP) are Vacuolar-facing. A helical transmembrane segment spans residues 37 to 57 (LVISILSCAFAVAAIVGPIIG). Residues 58-67 (GAFTTHVTWR) are Cytoplasmic-facing. A helical transmembrane segment spans residues 68–88 (WCFYINLPIGGLAIIMFLLTY). The Vacuolar portion of the chain corresponds to 89–132 (KAENKGILQQIKDAIGTISSFTFSKFRHQVNFKRLMNGIIFKFD). A helical transmembrane segment spans residues 133-153 (FFGFALCSAGLVLFLLGLTFG). The Cytoplasmic segment spans residues 154 to 163 (GNKYSWNSGQ). Residues 164–184 (VIAYLVLGVLLFIFSLVYDFF) traverse the membrane as a helical segment. Topologically, residues 185 to 205 (LFDKFNPEPDNISYRPLLLRR) are vacuolar. Asparagine 195 is a glycosylation site (N-linked (GlcNAc...) asparagine). The chain crosses the membrane as a helical span at residues 206–226 (LVAKPAIIIINMVTFLLCTGY). Topologically, residues 227–248 (NGQMIYSVQFFQLIFASSAWKA) are cytoplasmic. The chain crosses the membrane as a helical span at residues 249 to 269 (GLHLIPIVITNVIAAIASGVI). Topologically, residues 270 to 277 (TKKLGLVK) are vacuolar. The chain crosses the membrane as a helical span at residues 278-298 (PLLIFGGVLGVIGAGLMTLMT). Over 299-306 (NTSTKSTQ) the chain is Cytoplasmic. A helical membrane pass occupies residues 307–327 (IGVLLLPGFSLGFALQASLMS). The Vacuolar portion of the chain corresponds to 328-415 (AQLQITKDRP…STIGNILSDS (88 aa)). The helical transmembrane segment at 416 to 436 (IKNVFWMDLGFYALGFLFCSF) threads the bilayer. Residues 437–458 (SSNKKLIIPKKDETPEDNLEDK) lie on the Cytoplasmic side of the membrane.

This sequence belongs to the major facilitator superfamily.

It is found in the vacuole membrane. Functionally, transporter required for vacuolar uptake of histidine and lysine. The polypeptide is Vacuolar basic amino acid transporter 3 (VBA3) (Saccharomyces cerevisiae (strain ATCC 204508 / S288c) (Baker's yeast)).